The sequence spans 430 residues: Glutamate-1-semialdehyde 2,1-aminomutase (430 aa).

Position 267 is an N6-(pyridoxal phosphate)lysine (Lys267).

It belongs to the class-III pyridoxal-phosphate-dependent aminotransferase family. HemL subfamily. As to quaternary structure, homodimer. It depends on pyridoxal 5'-phosphate as a cofactor.

The protein localises to the cytoplasm. The enzyme catalyses (S)-4-amino-5-oxopentanoate = 5-aminolevulinate. Its pathway is porphyrin-containing compound metabolism; protoporphyrin-IX biosynthesis; 5-aminolevulinate from L-glutamyl-tRNA(Glu): step 2/2. The chain is Glutamate-1-semialdehyde 2,1-aminomutase from Sulfurovum sp. (strain NBC37-1).